The following is a 337-amino-acid chain: Inositol 2-dehydrogenase (337 aa).

The protein belongs to the Gfo/Idh/MocA family. As to quaternary structure, homotetramer.

It catalyses the reaction myo-inositol + NAD(+) = scyllo-inosose + NADH + H(+). Its function is as follows. Involved in the oxidation of myo-inositol (MI) to 2-keto-myo-inositol (2KMI or 2-inosose). The protein is Inositol 2-dehydrogenase of Klebsiella pneumoniae (strain 342).